The chain runs to 462 residues: Ubiquitin carboxyl-terminal hydrolase calypso (462 aa).

The 232-residue stretch at 29–260 (GWLELESDPG…IRFNLMAVVP (232 aa)) folds into the UCH catalytic domain. The Nucleophile role is filled by Cys-115. His-197 acts as the Proton donor in catalysis. In terms of domain architecture, ULD spans 357-385 (NYDKFICTFLTMLAHQGVLGELVSQHLLP). The positively charged C-terminal tail required for binding nucleosomes stretch occupies residues 387 to 462 (KKISGQSAAN…KGRNKCRKRK (76 aa)). A disordered region spans residues 394–462 (AANRLNKQNS…KGRNKCRKRK (69 aa)). Residues 399-447 (NKQNSAAASTANSSAGATAGGAKSQQQQQQQQQPQQPQTPKNGKSPGKT) show a composition bias toward low complexity. Residues 448-462 (PGRRRKGRNKCRKRK) are compositionally biased toward basic residues.

Belongs to the peptidase C12 family. BAP1 subfamily. Catalytic component of the polycomb repressive deubiquitinase (PR-DUB) complex, at least composed of caly/calypso, Asx and sba (MBD5/6 homolog). The PR-DUB complex associates with nucleosomes to mediate deubiquitination of histone H2AK118ub1 substrates; the association requires the positively charged C-terminal tail of caly, probably due to direct binding of DNA. Interacts (via ULD domain) with Asx (via DEUBAD domain); the interaction produces a stable heterodimer with a composite binding site for ubiquitin. Homodimerizes (via coiled-coil hinge-region between the UCH and ULD domains) to mediate assembly of 2 copies of the caly-Asx heterodimer into a bisymmetric tetramer; dimerization enhances PR-DUB association with nucleosomes.

The protein localises to the nucleus. The enzyme catalyses Thiol-dependent hydrolysis of ester, thioester, amide, peptide and isopeptide bonds formed by the C-terminal Gly of ubiquitin (a 76-residue protein attached to proteins as an intracellular targeting signal).. Catalytic component of the polycomb repressive deubiquitinase (PR-DUB) complex, a complex that specifically mediates deubiquitination of histone H2A monoubiquitinated at 'Lys-119' (H2AK118ub1). Mediates bisymmetric organization of the PR-DUB complex and is involved in association with nucleosomes to mediate deubiquitination. Does not deubiquitinate monoubiquitinated histone H2B. Required to maintain the transcriptionally repressive state of homeotic genes throughout development. The PR-DUB complex has weak or no activity toward 'Lys-48'- and 'Lys-63'-linked polyubiquitin chains. Polycomb group (PcG) protein. In Drosophila virilis (Fruit fly), this protein is Ubiquitin carboxyl-terminal hydrolase calypso.